Consider the following 204-residue polypeptide: tRNA (guanine-N(7)-)-methyltransferase (204 aa).

Glu-36, Glu-61, and Asp-111 together coordinate S-adenosyl-L-methionine. Asp-111 is an active-site residue. Substrate contacts are provided by residues Lys-115, Asp-147, and Thr-177–Glu-180.

It belongs to the class I-like SAM-binding methyltransferase superfamily. TrmB family.

The enzyme catalyses guanosine(46) in tRNA + S-adenosyl-L-methionine = N(7)-methylguanosine(46) in tRNA + S-adenosyl-L-homocysteine. Its pathway is tRNA modification; N(7)-methylguanine-tRNA biosynthesis. Functionally, catalyzes the formation of N(7)-methylguanine at position 46 (m7G46) in tRNA. The protein is tRNA (guanine-N(7)-)-methyltransferase of Chlorobium phaeobacteroides (strain DSM 266 / SMG 266 / 2430).